The chain runs to 227 residues: Phosphoribosylformylglycinamidine synthase subunit PurQ (227 aa).

A Glutamine amidotransferase type-1 domain is found at 3-227; the sequence is FAVCVFPGSN…LMLWYSLLSD (225 aa). Catalysis depends on C86, which acts as the Nucleophile. Active-site residues include H203 and E205.

As to quaternary structure, part of the FGAM synthase complex composed of 1 PurL, 1 PurQ and 2 PurS subunits.

The protein localises to the cytoplasm. It carries out the reaction N(2)-formyl-N(1)-(5-phospho-beta-D-ribosyl)glycinamide + L-glutamine + ATP + H2O = 2-formamido-N(1)-(5-O-phospho-beta-D-ribosyl)acetamidine + L-glutamate + ADP + phosphate + H(+). The catalysed reaction is L-glutamine + H2O = L-glutamate + NH4(+). It functions in the pathway purine metabolism; IMP biosynthesis via de novo pathway; 5-amino-1-(5-phospho-D-ribosyl)imidazole from N(2)-formyl-N(1)-(5-phospho-D-ribosyl)glycinamide: step 1/2. In terms of biological role, part of the phosphoribosylformylglycinamidine synthase complex involved in the purines biosynthetic pathway. Catalyzes the ATP-dependent conversion of formylglycinamide ribonucleotide (FGAR) and glutamine to yield formylglycinamidine ribonucleotide (FGAM) and glutamate. The FGAM synthase complex is composed of three subunits. PurQ produces an ammonia molecule by converting glutamine to glutamate. PurL transfers the ammonia molecule to FGAR to form FGAM in an ATP-dependent manner. PurS interacts with PurQ and PurL and is thought to assist in the transfer of the ammonia molecule from PurQ to PurL. The protein is Phosphoribosylformylglycinamidine synthase subunit PurQ of Aquifex aeolicus (strain VF5).